Consider the following 235-residue polypeptide: Retron Ec48 transmembrane protein (235 aa).

A run of 2 helical transmembrane segments spans residues 11–31 and 64–84; these read IVGV…FETI and AFGW…ALMT.

The protein localises to the cell inner membrane. Membrane component of antiviral defense system Retron Ec48, composed of a non-coding RNA (ncRNA), a reverse transcriptase (RT) and this membrane protein. Expression of this retron confers protection against bacteriophages lambda, T2, T4, T5 and T7. At multiplicity of infection (MOI) of 0.02 cultures grow normally when infected with lambda without collapsing, at MOI 2 cultures enter growth stasis. At MOI 3 cell membranes are permeabilized within 15 minutes of infection but do not lyse, suggesting the phage are not able to finish a replication cycle. Antiviral defense is suppressed by mutations that knockout the lambda gam expression or phage T7 gp5.9 expression; both viral genes inhibit host RecBCD. The Ec48 retron may sense the integrity of the RecBCD enzyme; when RecBCD is perturbed by viral proteins the Ec48 effector (the membrane protein) is activated, leading to abortive infection and bacterial growth arrest. The chain is Retron Ec48 transmembrane protein from Escherichia coli.